The sequence spans 183 residues: D-glycero-alpha-D-manno-heptose-1,7-bisphosphate 7-phosphatase (183 aa).

4 residues coordinate Zn(2+): cysteine 93, histidine 95, cysteine 108, and cysteine 110.

This sequence belongs to the GmhB family.

It is found in the cytoplasm. It catalyses the reaction D-glycero-alpha-D-manno-heptose 1,7-bisphosphate + H2O = D-glycero-alpha-D-manno-heptose 1-phosphate + phosphate. The protein operates within nucleotide-sugar biosynthesis; GDP-D-glycero-alpha-D-manno-heptose biosynthesis; GDP-D-glycero-alpha-D-manno-heptose from D-glycero-alpha-D-manno-heptose 7-phosphate: step 2/3. Its function is as follows. Converts the D-glycero-alpha-D-manno-heptose 1,7-bisphosphate intermediate into D-glycero-alpha-D-manno-heptose 1-phosphate by removing the phosphate group at the C-7 position. The protein is D-glycero-alpha-D-manno-heptose-1,7-bisphosphate 7-phosphatase (gmhB2) of Photorhabdus laumondii subsp. laumondii (strain DSM 15139 / CIP 105565 / TT01) (Photorhabdus luminescens subsp. laumondii).